The primary structure comprises 93 residues: Small ribosomal subunit protein uS19 (93 aa).

Belongs to the universal ribosomal protein uS19 family.

Protein S19 forms a complex with S13 that binds strongly to the 16S ribosomal RNA. The chain is Small ribosomal subunit protein uS19 from Lactobacillus helveticus (strain DPC 4571).